The chain runs to 413 residues: MGVIELCNTSSICIGRANPSCCSIERNQRRRIICMASSVPVQEESQQKQRVTGDAFIRPHLLKLSPYQPILPFEVLSTRLGRKPEDIVKLDANENPYGPPPEVIEALGAMKFPYIYPDPESRTLRAALAEDSGLESEYILAGCGADELIDLIMRCVLDPGDMIVDCPPTFTMYEFDAAVNGAHVIKVPRNPDFSLDVERIAEVVEHEKPKCIFLTSPNNPDGSIIDDETLLKILDLPILVILDEAYVEFSGMESKMKWVKKHENLIVLRTFSKRAGLAGLRVGYGAFPKSIIEFLWRAKQPYNVSVAAEVAACAALKNPAYLENVKVALVQERERLFNLLKEVPFLDPYPSYSNFILCKVTSGMDAKKLKEDLATMGVMIRHYNSKELKGYVRVSVGKPEHTEALMKCLKHFY.

Residues 1-35 (MGVIELCNTSSICIGRANPSCCSIERNQRRRIICM) constitute a chloroplast transit peptide. Lys273 carries the N6-(pyridoxal phosphate)lysine modification.

Belongs to the class-II pyridoxal-phosphate-dependent aminotransferase family. Histidinol-phosphate aminotransferase subfamily. Homodimer. It depends on pyridoxal 5'-phosphate as a cofactor. As to expression, expressed in flowers, leaves, stems and roots.

The protein resides in the plastid. It is found in the chloroplast. The enzyme catalyses L-histidinol phosphate + 2-oxoglutarate = 3-(imidazol-4-yl)-2-oxopropyl phosphate + L-glutamate. It functions in the pathway amino-acid biosynthesis; L-histidine biosynthesis; L-histidine from 5-phospho-alpha-D-ribose 1-diphosphate: step 7/9. This Nicotiana plumbaginifolia (Leadwort-leaved tobacco) protein is Histidinol-phosphate aminotransferase, chloroplastic (HPA).